We begin with the raw amino-acid sequence, 918 residues long: MASLSRALRVAAAHPRQSPTRGMGPCNLSSAAGPTAEKSVPYQRTLKEGQGTSVVAQGPSRPLPSTANVVVIGGGSLGCQTLYHLAKLGMSGAVLLERERLTSGTTWHTAGLLWQLRPSDVEVELLAHTRRVVSRELEEETGLHTGWIQNGGLFIASNRQRLDEYKRLMSLGKAYGVESHVLSPAETKTLYPLMNVDDLYGTLYVPHDGTMDPAGTCTTLARAASARGAQVIENCPVTGIRVWTDDFGVRRVAGVETQHGSIQTPCVVNCAGVWASAVGRMAGVKVPLVAMHHAYVVTERIEGIQNMPNVRDHDASVYLRLQGDALSVGGYEANPIFWEEVSDKFAFGLFDLDWEVFTQHIEGAINRVPVLEKTGIKSTVCGPESFTPDHKPLMGEAPELRGFFLGCGFNSAGMMLGGGCGQELAHWIIHGRPEKDMHGYDIRRFHHSLTDHPRWIRERSHESYAKNYSVVFPHDEPLAGRNMRRDPLHEELLGQGCVFQERHGWERPGWFHPRGPAPVLEYDYYGAYGSRAHEDYAYRRLLADEYTFAFPPHHDTIKKECLACRGAAAVFDMSYFGKFYLVGLDARKAADWLFSADVSRPPGSTVYTCMLNHRGGTESDLTVSRLAPSHQASPLAPAFEGDGYYLAMGGAVAQHNWSHITTVLQDQKSQCQLIDSSEDLGMISIQGPASRAILQEVLDADLSNEAFPFSTHKLLRAAGHLVRAMRLSFVGELGWELHIPKASCVPVYRAVMAAGAKHGLINAGYRAIDSLSIEKGYRHWHADLRPDDSPLEAGLAFTCKLKSPVPFLGREALEQQRAAGLRRRLVCFTMEDKVPMFGLEAIWRNGQVVGHVRRADFGFAIDKTIAYGYIHDPSGGPVSLDFVKSGDYALERMGVTYGAQAHLKSPFDPNNKRVKGIY.

Residues 1 to 13 (MASLSRALRVAAA) show a composition bias toward low complexity. The transit peptide at 1–22 (MASLSRALRVAAAHPRQSPTRG) directs the protein to the mitochondrion. Positions 1-40 (MASLSRALRVAAAHPRQSPTRGMGPCNLSSAAGPTAEKSV) are disordered. At Lys38 the chain carries N6-succinyllysine. The residue at position 108 (His108) is a Tele-8alpha-FAD histidine. Lys173 carries the post-translational modification N6-acetyllysine; alternate. Lys173 bears the N6-succinyllysine; alternate mark. N6-succinyllysine occurs at positions 377 and 391. 2 positions are modified to N6-acetyllysine: Lys559 and Lys775. The residue at position 777 (Tyr777) is a Phosphotyrosine. N6-acetyllysine; alternate is present on residues Lys802, Lys884, and Lys904. N6-succinyllysine; alternate is present on residues Lys802, Lys884, and Lys904.

It belongs to the GcvT family. FAD serves as cofactor. As to expression, expressed in pancreas, liver and kidney.

It is found in the mitochondrion matrix. The enzyme catalyses (6S)-5,6,7,8-tetrahydrofolyl-(gamma-L-Glu)(n) + sarcosine + oxidized [electron-transfer flavoprotein] + H(+) = (6R)-5,10-methylenetetrahydrofolyl-(gamma-L-Glu)(n) + reduced [electron-transfer flavoprotein] + glycine. It functions in the pathway amine and polyamine degradation; sarcosine degradation; formaldehyde and glycine from sarcosine: step 1/1. Its function is as follows. Catalyzes the last step of the oxidative degradation of choline to glycine. Converts sarcosine into glycine. The sequence is that of Sarcosine dehydrogenase, mitochondrial from Homo sapiens (Human).